Consider the following 94-residue polypeptide: PqqA binding protein (94 aa).

The protein belongs to the PqqD family. In terms of assembly, monomer. Interacts with PqqE.

Its pathway is cofactor biosynthesis; pyrroloquinoline quinone biosynthesis. Functions as a PqqA binding protein and presents PqqA to PqqE, in the pyrroloquinoline quinone (PQQ) biosynthetic pathway. The polypeptide is PqqA binding protein (Pseudomonas syringae pv. syringae (strain B728a)).